We begin with the raw amino-acid sequence, 410 residues long: Arginine biosynthesis bifunctional protein ArgJ (410 aa).

6 residues coordinate substrate: threonine 158, lysine 184, threonine 195, glutamate 282, asparagine 405, and serine 410. The active-site Nucleophile is the threonine 195.

This sequence belongs to the ArgJ family. In terms of assembly, heterotetramer of two alpha and two beta chains.

It localises to the cytoplasm. The enzyme catalyses N(2)-acetyl-L-ornithine + L-glutamate = N-acetyl-L-glutamate + L-ornithine. It catalyses the reaction L-glutamate + acetyl-CoA = N-acetyl-L-glutamate + CoA + H(+). Its pathway is amino-acid biosynthesis; L-arginine biosynthesis; L-ornithine and N-acetyl-L-glutamate from L-glutamate and N(2)-acetyl-L-ornithine (cyclic): step 1/1. It functions in the pathway amino-acid biosynthesis; L-arginine biosynthesis; N(2)-acetyl-L-ornithine from L-glutamate: step 1/4. In terms of biological role, catalyzes two activities which are involved in the cyclic version of arginine biosynthesis: the synthesis of N-acetylglutamate from glutamate and acetyl-CoA as the acetyl donor, and of ornithine by transacetylation between N(2)-acetylornithine and glutamate. This Bartonella henselae (strain ATCC 49882 / DSM 28221 / CCUG 30454 / Houston 1) (Rochalimaea henselae) protein is Arginine biosynthesis bifunctional protein ArgJ.